Consider the following 79-residue polypeptide: Translational regulator CsrA (79 aa).

Belongs to the CsrA/RsmA family. In terms of assembly, homodimer; the beta-strands of each monomer intercalate to form a hydrophobic core, while the alpha-helices form wings that extend away from the core.

The protein resides in the cytoplasm. A translational regulator that binds mRNA to regulate translation initiation and/or mRNA stability. Usually binds in the 5'-UTR at or near the Shine-Dalgarno sequence preventing ribosome-binding, thus repressing translation. Its main target seems to be the major flagellin gene, while its function is anatagonized by FliW. In Geobacter sulfurreducens (strain ATCC 51573 / DSM 12127 / PCA), this protein is Translational regulator CsrA.